A 566-amino-acid chain; its full sequence is Osteoclast stimulatory transmembrane protein (566 aa).

Residues 1–51 lie on the Cytoplasmic side of the membrane; it reads MPGHPGAAEQLVKTGWRSWHLGFWKALAPLQAAWDAFSQPVPASCGQLLTQ. Residues 52 to 72 traverse the membrane as a helical segment; it reads LLLCASLAAAAAGLVYHWLAS. Residues 73–81 are Extracellular-facing; it reads LLLYPPGPS. The chain crosses the membrane as a helical span at residues 82–102; sequence AMVATVCGLLVFLSLGLVPPV. Topologically, residues 103-128 are cytoplasmic; it reads RCLFALSVPTLGMEQGRRLLLSYSTA. Residues 129 to 149 form a helical membrane-spanning segment; it reads TLAIAVVPNVLANVGAAGQVL. The Extracellular portion of the chain corresponds to 150 to 227; it reads RCVTEGSLES…ARAAALGTQR (78 aa). Residues 228 to 248 traverse the membrane as a helical segment; that stretch reads VVTGLFMLGLLVESAWYLHCY. Topologically, residues 249–304 are cytoplasmic; the sequence is LTDLRFDNIYATQQLTQRLAQAQATHLLAPPPTWLLQAAQLRLSQEELLSCLLRLG. A helical transmembrane segment spans residues 305 to 325; sequence LLALLLVATAVAVATDHVAFL. Residues 326–398 lie on the Extracellular side of the membrane; it reads LAQATVDWAQ…CPLLPARRPR (73 aa). A helical membrane pass occupies residues 399-419; that stretch reads AAAPLAAGALQLLAGSTVLLE. The Cytoplasmic portion of the chain corresponds to 420–566; the sequence is AYARRLRHAI…EGNTGHDRPG (147 aa).

Its subcellular location is the membrane. Functionally, probable cell surface receptor that plays a role in cellular fusion and cell differentiation. Cooperates with DCSTAMP in modulating cell-cell fusion in both osteoclasts and foreign body giant cells (FBGCs). Involved in osteoclast bone resorption. Promotes osteoclast differentiation and may play a role in the multinucleated osteoclast maturation. This Homo sapiens (Human) protein is Osteoclast stimulatory transmembrane protein (OCSTAMP).